The following is a 327-amino-acid chain: Quinone oxidoreductase 1 (327 aa).

Residues 42–46 (FIDTY), Tyr-130, 152–153 (GV), 173–177 (GTAQK), Tyr-192, Ser-216, 238–241 (FGNS), 264–266 (PSL), and Arg-317 contribute to the NADP(+) site.

This sequence belongs to the zinc-containing alcohol dehydrogenase family. Quinone oxidoreductase subfamily. Homodimer.

The enzyme catalyses 2 a quinone + NADPH + H(+) = 2 a 1,4-benzosemiquinone + NADP(+). The protein is Quinone oxidoreductase 1 (qorA) of Escherichia coli (strain K12).